The primary structure comprises 453 residues: Cholesterol 7-desaturase nvd (453 aa).

A helical membrane pass occupies residues 53-73 (IVEYILILTLMFAFSAILYVI). A Rieske domain is found at 126-229 (WFAVAETREL…VVETDGAIWI (104 aa)). Cysteine 167, histidine 169, cysteine 187, and histidine 190 together coordinate [2Fe-2S] cluster.

Belongs to the cholesterol 7-desaturase family. Requires [2Fe-2S] cluster as cofactor.

The protein resides in the membrane. It catalyses the reaction cholesterol + NADPH + O2 + H(+) = 7-dehydrocholesterol + NADP(+) + 2 H2O. The catalysed reaction is cholesterol + NADH + O2 + H(+) = 7-dehydrocholesterol + NAD(+) + 2 H2O. It participates in steroid hormone biosynthesis; dafachronic acid biosynthesis. In terms of biological role, catalyzes the production of 7-dehydrocholesterol (7-DHC or cholesta-5,7-dien-3beta-ol) by inserting a double bond (desaturating) at the C7-C8 single bond of cholesterol. Essential regulator of steroid biosynthesis as this reaction is the first step in the synthesis of the steroid hormone Delta(7)-dafachronic acid. The protein is Cholesterol 7-desaturase nvd of Bombyx mori (Silk moth).